A 487-amino-acid chain; its full sequence is Fatty acid desaturase 2-like protein FADS2B (487 aa).

The span at 1-11 (MKLEEKLEHNE) shows a compositional bias: basic and acidic residues. A disordered region spans residues 1–20 (MKLEEKLEHNESLVGKSRPC). Residues 1 to 175 (MKLEEKLEHN…AMNMFSANLR (175 aa)) are Cytoplasmic-facing. In terms of domain architecture, Cytochrome b5 heme-binding spans 62-139 (LNLYTWQEIQ…LKPLLIGELS (78 aa)). Heme-binding residues include His97 and His120. A helical transmembrane segment spans residues 176–196 (FFFLHLAQILILEISAWLILH). Residues 197 to 201 (HFGSS) are Lumenal-facing. The chain crosses the membrane as a helical span at residues 202 to 222 (WLVTILISFLLTVSQAQCSFL). Topologically, residues 223-307 (QHDLGHLSMF…IKYIDYEKQH (85 aa)) are cytoplasmic. The Histidine box-1 motif lies at 224 to 228 (HDLGH). The short motif at 261–265 (HFQHH) is the Histidine box-2 element. The chain crosses the membrane as a helical span at residues 308–328 (LYFYMVALPFLMPVYFNLQSM). Topologically, residues 329-349 (QVMYLRKYWMDIAWVSSFYIR) are lumenal. The helical transmembrane segment at 350 to 370 (YFITFGPFYGIFGTVLLIYLV) threads the bilayer. At 371-487 (KFIESPWIAY…ASLWMNAYYE (117 aa)) the chain is on the cytoplasmic side. Positions 426-430 (QIEHH) match the Histidine box-3 motif.

It belongs to the fatty acid desaturase type 1 family.

It localises to the endoplasmic reticulum membrane. It participates in lipid metabolism; polyunsaturated fatty acid biosynthesis. This is Fatty acid desaturase 2-like protein FADS2B from Mus musculus (Mouse).